The sequence spans 1875 residues: Neuron navigator 1 (1875 aa).

M1 is subject to N-acetylmethionine. The tract at residues 1-63 is disordered; it reads MLGSSVKSVQ…GGSGSMAKAS (63 aa). Phosphoserine occurs at positions 93 and 145. Disordered stretches follow at residues 115–230 and 280–339; these read SDDM…EERA and SSLR…VGGS. T162 is modified (phosphothreonine). A phosphoserine mark is found at S197 and S202. The stretch at 258 to 283 forms a coiled coil; sequence ESQRKRTVQNVLDLRQNLEETMSSLR. The span at 280-291 shows a compositional bias: polar residues; it reads SSLRGSQVTHSS. 5 positions are modified to phosphoserine: S299, S311, S315, S365, and S394. Residues 304–318 show a composition bias toward low complexity; sequence PRSVSSLSNRSSPLS. 2 disordered regions span residues 391–463 and 477–783; these read GYMS…RTDS and SESE…AELP. 2 stretches are compositionally biased toward low complexity: residues 414 to 428 and 436 to 456; these read DESS…DASD and NASS…RSST. Phosphoserine occurs at positions 455, 477, 479, and 493. Over residues 479–489 the composition is skewed to basic and acidic residues; that stretch reads SEEKTPKKLEY. Positions 506–522 are enriched in basic and acidic residues; it reads ERPESCDDASKGGELKK. S531 bears the Phosphoserine mark. T537 is modified (phosphothreonine). At S544 the chain carries Phosphoserine. T547 bears the Phosphothreonine mark. Basic and acidic residues predominate over residues 558 to 569; it reads GKPEGKATDKGK. T575 is modified (phosphothreonine). The segment covering 584-594 has biased composition (basic and acidic residues); it reads AGRDRLSDAKK. Polar residues-rich tracts occupy residues 618 to 638 and 648 to 658; these read GTAT…QKSS and RKTSLDVSNSV. S651 is subject to Phosphoserine. R690 is subject to Omega-N-methylarginine. Composition is skewed to polar residues over residues 696–712 and 726–735; these read VSSS…QGGL and GRSTPAPVNQ. Positions 733 to 758 form a coiled coil; that stretch reads VNQTDREKEKAKAKAVALDSDNISLK. S752, S756, S762, S799, and S810 each carry phosphoserine. Residues 753 to 772 are compositionally biased toward polar residues; the sequence is DNISLKSIGSPESTPKNQAS. Disordered regions lie at residues 800 to 840 and 893 to 982; these read LANL…PLPS and MSLP…SPPA. Low complexity-rich tracts occupy residues 807–818 and 893–902; these read NSNSLDLPSSSD and MSLPSAFPSS. S998 carries the post-translational modification Phosphoserine. T1004 bears the Phosphothreonine mark. Positions 1070-1161 form a coiled coil; that stretch reads SSAEERMQSE…SEAQAVIQGA (92 aa). T1168 carries the phosphothreonine modification. Disordered stretches follow at residues 1172–1202, 1242–1306, 1359–1381, and 1808–1841; these read LRIK…KDAD, ATPD…KEVS, VAPG…LSSP, and KLYH…SLDS. S1179 is subject to Phosphoserine. Over residues 1179 to 1198 the composition is skewed to low complexity; that stretch reads SSDSISSLNSITSHSSIGSS. The segment covering 1244–1259 has biased composition (polar residues); that stretch reads PDSSAPSSPKLQHGST. The segment covering 1260–1281 has biased composition (low complexity); it reads ETASPSIKSSTSSSVGTEVTET. At S1263 the chain carries Phosphoserine. Positions 1301-1360 form a coiled coil; sequence EKKEVSELRSELWEKEMKLTDIRLEALNSAHQLDQLRETMHNMQLEVDLLKAENDRLKVA. Over residues 1365 to 1381 the composition is skewed to polar residues; sequence SGCTPGQVPGSSALSSP. S1380 carries the phosphoserine modification.

This sequence belongs to the Nav/unc-53 family. As to quaternary structure, interacts with tubulin. In terms of tissue distribution, expressed in heart and brain. Present in brain (at protein level). In adult brain, found almost exclusively in areas of secondary neurogenesis from the hippocampus and the subventricular zone.

Its subcellular location is the cytoplasm. The protein resides in the cytoskeleton. In terms of biological role, may be involved in neuronal migration. This chain is Neuron navigator 1 (Nav1), found in Mus musculus (Mouse).